Here is a 716-residue protein sequence, read N- to C-terminus: Dynein axonemal intermediate chain 7 (716 aa).

Belongs to the DNAI7 family. In terms of assembly, part of the multisubunit axonemal dynein complex formed at least of two heavy chains and a number of intermediate and light chains. Interacts with tubulin. Associates with microtubule. Ubiquitinated. Ubiquitination leads to its degradation through the 26S proteasome. Ubiquitin-proteasome-mediated DNAI7 degradation occurs in mitosis.

It is found in the cell projection. Its subcellular location is the cilium. The protein resides in the cytoplasm. Its function is as follows. Via its association with the multisubunit axonemal dynein complex, is potentially involved in the regulation of cilia function. May also act as a cell cycle regulator. The polypeptide is Dynein axonemal intermediate chain 7 (Homo sapiens (Human)).